Here is a 391-residue protein sequence, read N- to C-terminus: Trehalose-phosphate phosphatase (391 aa).

Asp-147 serves as the catalytic Nucleophile. Mg(2+) contacts are provided by Asp-147, Asp-149, and Asp-330. 147–149 (DFD) is a substrate binding site.

The protein belongs to the trehalose phosphatase family. Mg(2+) is required as a cofactor.

The enzyme catalyses alpha,alpha-trehalose 6-phosphate + H2O = alpha,alpha-trehalose + phosphate. The protein operates within glycan biosynthesis; trehalose biosynthesis. Functionally, removes the phosphate from trehalose 6-phosphate to produce free trehalose. The sequence is that of Trehalose-phosphate phosphatase (otsB) from Mycobacterium bovis (strain ATCC BAA-935 / AF2122/97).